We begin with the raw amino-acid sequence, 85 residues long: Large ribosomal subunit protein bL27 (85 aa).

The interval 1–20 (MAHKKAGGSTRNGRDSESKR) is disordered.

This sequence belongs to the bacterial ribosomal protein bL27 family.

This is Large ribosomal subunit protein bL27 from Yersinia pseudotuberculosis serotype O:1b (strain IP 31758).